The sequence spans 327 residues: Eukaryotic translation initiation factor 3 subunit I (327 aa).

5 WD repeats span residues 8–49 (GHER…GSYD), 51–89 (HNGA…CLYT), 188–227 (VHRY…KLKQ), 229–268 (KSER…GHFE), and 285–324 (GHFG…LGFT).

This sequence belongs to the eIF-3 subunit I family. In terms of assembly, component of the eukaryotic translation initiation factor 3 (eIF-3) complex.

It is found in the cytoplasm. Functionally, component of the eukaryotic translation initiation factor 3 (eIF-3) complex, which is involved in protein synthesis of a specialized repertoire of mRNAs and, together with other initiation factors, stimulates binding of mRNA and methionyl-tRNAi to the 40S ribosome. The eIF-3 complex specifically targets and initiates translation of a subset of mRNAs involved in cell proliferation. The sequence is that of Eukaryotic translation initiation factor 3 subunit I from Caenorhabditis elegans.